The sequence spans 55 residues: Large ribosomal subunit protein bL33 (55 aa).

This sequence belongs to the bacterial ribosomal protein bL33 family.

This is Large ribosomal subunit protein bL33 from Arthrobacter sp. (strain FB24).